The following is a 4717-amino-acid chain: Midasin (4717 aa).

6 AAA-ATPase protomer regions span residues 149–384, 458–797, 871–1131, 1157–1448, 1552–1811, and 1858–2106; these read LVQK…FGAF, EQLA…GLRR, EHYI…QEVI, SLKE…NACE, VLRA…EVFD, and VLES…FLLK. Residues 159-166 and 474-481 contribute to the ATP site; these read GPEGIGKK and GETGTGKT. A Phosphoserine modification is found at serine 593. Residues 901–908, 1193–1200, 1566–1573, and 1876–1883 each bind ATP; these read GPTSSGKT, GDTGCGKT, GSPGVGKT, and GDTATGKT. The tract at residues 2173–3925 is linker; the sequence is KLLRKVLLTN…SGVGAEDITN (1753 aa). Disordered regions lie at residues 3898 to 3924, 3936 to 4283, and 4295 to 4365; these read PQEG…EDIT, LANE…LGDH, and EWED…EVGD. Acidic residues-rich tracts occupy residues 3936–3950 and 3973–3993; these read LANE…DLDE and ENSD…DIPE. Positions 4020–4030 are enriched in polar residues; that stretch reads NEQSAANNESD. Over residues 4031 to 4049 the composition is skewed to basic and acidic residues; the sequence is LVSKEDDNKALEDKDRQEK. Residues 4050-4066 show a composition bias toward acidic residues; sequence EDEEEMSDDVGIDDEIQ. Residues 4080–4103 show a composition bias toward basic and acidic residues; sequence NEDHLDLPEDLKLDEKEGDVSKDS. Acidic residues-rich tracts occupy residues 4104–4177, 4184–4196, and 4226–4236; these read DLED…ESTE, EELE…EDQA, and ENEELGEEDGA. 2 stretches are compositionally biased toward basic and acidic residues: residues 4258–4275 and 4329–4342; these read QKGE…EADR and AEKD…RDES. A compositionally biased stretch (polar residues) spans 4343–4355; sequence ANQNPDSMNSTNI. One can recognise a VWFA domain in the interval 4505 to 4707; the sequence is QVMISIDDSK…ELPQLLSSAL (203 aa).

Belongs to the midasin family. Associates with pre-60S ribosomes in the nucleoplasm.

It localises to the nucleus. The protein localises to the nucleolus. Its subcellular location is the nucleoplasm. Nuclear chaperone required for maturation and nuclear export of pre-60S ribosome subunits. Functions at successive maturation steps to remove ribosomal factors at critical transition points, first driving the exit of early pre-60S particles from the nucleolus and then driving late pre-60S particles from the nucleus. The chain is Midasin (mdn1) from Schizosaccharomyces pombe (strain 972 / ATCC 24843) (Fission yeast).